The chain runs to 293 residues: Ribosomal protein L11 methyltransferase (293 aa).

Residues Thr-145, Gly-166, Asp-188, and Asn-230 each contribute to the S-adenosyl-L-methionine site.

Belongs to the methyltransferase superfamily. PrmA family.

The protein resides in the cytoplasm. It catalyses the reaction L-lysyl-[protein] + 3 S-adenosyl-L-methionine = N(6),N(6),N(6)-trimethyl-L-lysyl-[protein] + 3 S-adenosyl-L-homocysteine + 3 H(+). Methylates ribosomal protein L11. This chain is Ribosomal protein L11 methyltransferase, found in Actinobacillus succinogenes (strain ATCC 55618 / DSM 22257 / CCUG 43843 / 130Z).